Consider the following 431-residue polypeptide: Na(+)-translocating NADH-quinone reductase subunit F (431 aa).

A helical membrane pass occupies residues 9 to 29; the sequence is FICIASLIFCAIGVILAGVIL. In terms of domain architecture, 2Fe-2S ferredoxin-type spans 39–133; that stretch reads HPCKLKINDN…DMSLEIEERY (95 aa). [2Fe-2S] cluster is bound by residues C76, C82, C85, and C117. An FAD-binding FR-type domain is found at 136-286; that stretch reads ASSWEGTVIS…SGPYGESFMK (151 aa). The segment at 289 to 413 is catalytic; that stretch reads DRPLIFLIGG…PLHNSSILKL (125 aa).

This sequence belongs to the NqrF family. In terms of assembly, composed of six subunits; NqrA, NqrB, NqrC, NqrD, NqrE and NqrF. It depends on [2Fe-2S] cluster as a cofactor. FAD is required as a cofactor.

It is found in the cell inner membrane. It carries out the reaction a ubiquinone + n Na(+)(in) + NADH + H(+) = a ubiquinol + n Na(+)(out) + NAD(+). Functionally, NQR complex catalyzes the reduction of ubiquinone-1 to ubiquinol by two successive reactions, coupled with the transport of Na(+) ions from the cytoplasm to the periplasm. The first step is catalyzed by NqrF, which accepts electrons from NADH and reduces ubiquinone-1 to ubisemiquinone by a one-electron transfer pathway. The chain is Na(+)-translocating NADH-quinone reductase subunit F from Chlamydia pneumoniae (Chlamydophila pneumoniae).